The primary structure comprises 490 residues: MAQRAVWLISHESGTPLGGIVKFSRRYPTVEKRAKVFNGASYVPVPEDGPFLKALLFELRLLDDEKDFLESRDSCSHINKTSIYGVPVGGEELWPVVAFLKNGMIYACVPLVEQTLSPRPPLISISGISQGFELLFGVQDFLSSGQKTDSELNTKLSQLSDLLLQTCPFGTLLDANLQNSLDSINSASVTHLQKQPAWKTGTYKGKPQVSISITEKVNSMQYDKQEIADTWQVVGVVTCKCDLEGSMPNVTISLSLPTNGSPLQDILVHPCVTSLDSAILTSSSIDAMDDSAFSGPYKFPLTPPLESFNLCYYTSQVPVPPILGFYQVKEEEVQLKITVNLKLHESVKNSFEFCEAHIPFYNRGPITHVEYKASFGQLEVFREKSLLVWIIGQKFPKSMEISLSGTITFGAKNHEKQPFDQICIGGTAYLKLHFRILDYTLTGCYVDQHSVQVFASGKPKISTYRKLISSDYYIWNSKAPAPVTYGSLLL.

The region spanning 206–476 is the MHD domain; it reads KPQVSISITE…LISSDYYIWN (271 aa).

It belongs to the adaptor complexes medium subunit family. As to quaternary structure, probably part of the adaptor protein complex 5 (AP-5) a tetramer composed of AP5B1, AP5M1, AP5S1 and AP5Z1.

Its subcellular location is the cytoplasm. The protein localises to the cytosol. It is found in the late endosome membrane. It localises to the lysosome membrane. Functionally, as part of AP-5, a probable fifth adaptor protein complex it may be involved in endosomal transport. The polypeptide is AP-5 complex subunit mu-1 (AP5M1) (Bos taurus (Bovine)).